We begin with the raw amino-acid sequence, 1935 residues long: Myosin-7 (1935 aa).

The Myosin N-terminal SH3-like domain maps to 32 to 81; it reads DLKKDVFVPDDKEEFVKAKIISREGGKITAETEHGKTVTVKEDQVLQQNP. The Myosin motor domain maps to 85 to 778; it reads DKIEDMAMLT…LLGLLEEMRD (694 aa). Lys-129 carries the post-translational modification N6,N6,N6-trimethyllysine. 178–185 is a binding site for ATP; sequence GESGAGKT. Thr-378 is modified (phosphothreonine). 2 actin-binding regions span residues 655–677 and 757–771; these read LNKL…IPNE and RFGH…GLLG. Residues 781–810 enclose the IQ domain; it reads LSRIITRIQAQSRGVLARMEFKKLLERRDS. A coiled-coil region spans residues 839–1935; that stretch reads LLKSAETEKE…DIGTKGLNEE (1097 aa). 2 positions are modified to phosphoserine: Ser-1137 and Ser-1269. Thr-1282 is modified (phosphothreonine). The residue at position 1308 (Tyr-1308) is a Phosphotyrosine. Thr-1309 bears the Phosphothreonine mark. Ser-1510 is modified (phosphoserine). Position 1513 is a phosphothreonine (Thr-1513). A disordered region spans residues 1907 to 1935; sequence EERADIAESQVNKLRAKSRDIGTKGLNEE. Positions 1923 to 1935 are enriched in basic and acidic residues; that stretch reads KSRDIGTKGLNEE.

This sequence belongs to the TRAFAC class myosin-kinesin ATPase superfamily. Myosin family. Muscle myosin is a hexameric protein that consists of 2 heavy chain subunits (MHC), 2 alkali light chain subunits (MLC) and 2 regulatory light chain subunits (MLC-2). Interacts with ECPAS. Interacts (via C-terminus) with LRRC39.

The protein resides in the cytoplasm. The protein localises to the myofibril. It localises to the sarcomere. Its function is as follows. Myosins are actin-based motor molecules with ATPase activity essential for muscle contraction. Forms regular bipolar thick filaments that, together with actin thin filaments, constitute the fundamental contractile unit of skeletal and cardiac muscle. This Equus caballus (Horse) protein is Myosin-7 (MYH7).